A 328-amino-acid polypeptide reads, in one-letter code: DNA-directed RNA polymerase subunit alpha (328 aa).

The segment at 1-231 (MIYQMQMPER…EHVSLFANFS (231 aa)) is alpha N-terminal domain (alpha-NTD). The tract at residues 252 to 328 (MRKLLQTRIE…MDITKYQMKS (77 aa)) is alpha C-terminal domain (alpha-CTD).

This sequence belongs to the RNA polymerase alpha chain family. Homodimer. The RNAP catalytic core consists of 2 alpha, 1 beta, 1 beta' and 1 omega subunit. When a sigma factor is associated with the core the holoenzyme is formed, which can initiate transcription.

The catalysed reaction is RNA(n) + a ribonucleoside 5'-triphosphate = RNA(n+1) + diphosphate. DNA-dependent RNA polymerase catalyzes the transcription of DNA into RNA using the four ribonucleoside triphosphates as substrates. The protein is DNA-directed RNA polymerase subunit alpha of Prosthecochloris aestuarii (strain DSM 271 / SK 413).